The sequence spans 353 residues: Holliday junction branch migration complex subunit RuvB (353 aa).

A large ATPase domain (RuvB-L) region spans residues 4-185 (ADRLITATGG…FGIVQRLEFY (182 aa)). ATP contacts are provided by residues I24, R25, G66, K69, T70, T71, 132-134 (EDF), R175, Y185, and R222. Position 70 (T70) interacts with Mg(2+). Positions 186 to 256 (NIADLSTIVS…TADKALNLLD (71 aa)) are small ATPAse domain (RuvB-S). The interval 259-353 (EHGFDHQDRR…DDFGDEPVDL (95 aa)) is head domain (RuvB-H). Residues R295, R314, and R319 each coordinate DNA.

The protein belongs to the RuvB family. Homohexamer. Forms an RuvA(8)-RuvB(12)-Holliday junction (HJ) complex. HJ DNA is sandwiched between 2 RuvA tetramers; dsDNA enters through RuvA and exits via RuvB. An RuvB hexamer assembles on each DNA strand where it exits the tetramer. Each RuvB hexamer is contacted by two RuvA subunits (via domain III) on 2 adjacent RuvB subunits; this complex drives branch migration. In the full resolvosome a probable DNA-RuvA(4)-RuvB(12)-RuvC(2) complex forms which resolves the HJ.

The protein localises to the cytoplasm. It carries out the reaction ATP + H2O = ADP + phosphate + H(+). In terms of biological role, the RuvA-RuvB-RuvC complex processes Holliday junction (HJ) DNA during genetic recombination and DNA repair, while the RuvA-RuvB complex plays an important role in the rescue of blocked DNA replication forks via replication fork reversal (RFR). RuvA specifically binds to HJ cruciform DNA, conferring on it an open structure. The RuvB hexamer acts as an ATP-dependent pump, pulling dsDNA into and through the RuvAB complex. RuvB forms 2 homohexamers on either side of HJ DNA bound by 1 or 2 RuvA tetramers; 4 subunits per hexamer contact DNA at a time. Coordinated motions by a converter formed by DNA-disengaged RuvB subunits stimulates ATP hydrolysis and nucleotide exchange. Immobilization of the converter enables RuvB to convert the ATP-contained energy into a lever motion, pulling 2 nucleotides of DNA out of the RuvA tetramer per ATP hydrolyzed, thus driving DNA branch migration. The RuvB motors rotate together with the DNA substrate, which together with the progressing nucleotide cycle form the mechanistic basis for DNA recombination by continuous HJ branch migration. Branch migration allows RuvC to scan DNA until it finds its consensus sequence, where it cleaves and resolves cruciform DNA. This is Holliday junction branch migration complex subunit RuvB from Pseudomonas syringae pv. syringae (strain B728a).